The chain runs to 92 residues: Large ribosomal subunit protein bL34m (92 aa).

The transit peptide at 1-46 (MAVLAGSLLGPTSRSAALLGGRWLQPRAWLGFPDAWGLPTPQQARG) directs the protein to the mitochondrion. Ser71 bears the Phosphoserine mark.

It belongs to the bacterial ribosomal protein bL34 family. Component of the mitochondrial large ribosomal subunit (mt-LSU). Mature mammalian 55S mitochondrial ribosomes consist of a small (28S) and a large (39S) subunit. The 28S small subunit contains a 12S ribosomal RNA (12S mt-rRNA) and 30 different proteins. The 39S large subunit contains a 16S rRNA (16S mt-rRNA), a copy of mitochondrial valine transfer RNA (mt-tRNA(Val)), which plays an integral structural role, and 52 different proteins.

The protein localises to the mitochondrion. The sequence is that of Large ribosomal subunit protein bL34m (MRPL34) from Homo sapiens (Human).